An 828-amino-acid chain; its full sequence is Periplasmic nitrate reductase (828 aa).

A signal peptide (tat-type signal) is located at residues 1–31; sequence MKLSRRSFMKANAVAAAAAAAGLSVPGVARA. Residues 39–95 enclose the 4Fe-4S Mo/W bis-MGD-type domain; sequence IKWDKAPCRFCGTGCGVLVGTQQGRVVACQGDPDAPVNRGLNCIKGYFLPKIMYGKD. [4Fe-4S] cluster-binding residues include cysteine 46, cysteine 49, cysteine 53, and cysteine 81. Mo-bis(molybdopterin guanine dinucleotide) is bound by residues lysine 83, glutamine 150, asparagine 175, cysteine 179, 212 to 219, 243 to 247, 262 to 264, methionine 372, glutamine 376, asparagine 482, 508 to 509, lysine 531, aspartate 558, and 718 to 727; these read WGSNMAEM, STYQH, QSD, SD, and TGRVLEHWHT. Residue phenylalanine 794 participates in substrate binding. Mo-bis(molybdopterin guanine dinucleotide)-binding residues include asparagine 802 and lysine 819.

The protein belongs to the prokaryotic molybdopterin-containing oxidoreductase family. NasA/NapA/NarB subfamily. In terms of assembly, component of the periplasmic nitrate reductase NapAB complex composed of NapA and NapB. It depends on [4Fe-4S] cluster as a cofactor. Requires Mo-bis(molybdopterin guanine dinucleotide) as cofactor. In terms of processing, predicted to be exported by the Tat system. The position of the signal peptide cleavage has not been experimentally proven.

It localises to the periplasm. The catalysed reaction is 2 Fe(II)-[cytochrome] + nitrate + 2 H(+) = 2 Fe(III)-[cytochrome] + nitrite + H2O. Catalytic subunit of the periplasmic nitrate reductase complex NapAB. Receives electrons from NapB and catalyzes the reduction of nitrate to nitrite. This chain is Periplasmic nitrate reductase, found in Escherichia coli O81 (strain ED1a).